The sequence spans 202 residues: Glycerol-3-phosphate acyltransferase (202 aa).

5 helical membrane passes run 3–23, 87–107, 118–138, 144–164, and 167–187; these read NLII…LILA, LLWS…YLLF, GAMI…WVVI, ISSL…FIFN, and LEIH…YKHL.

This sequence belongs to the PlsY family. In terms of assembly, probably interacts with PlsX.

Its subcellular location is the cell inner membrane. It carries out the reaction an acyl phosphate + sn-glycerol 3-phosphate = a 1-acyl-sn-glycero-3-phosphate + phosphate. It functions in the pathway lipid metabolism; phospholipid metabolism. In terms of biological role, catalyzes the transfer of an acyl group from acyl-phosphate (acyl-PO(4)) to glycerol-3-phosphate (G3P) to form lysophosphatidic acid (LPA). This enzyme utilizes acyl-phosphate as fatty acyl donor, but not acyl-CoA or acyl-ACP. This is Glycerol-3-phosphate acyltransferase from Campylobacter jejuni subsp. jejuni serotype O:2 (strain ATCC 700819 / NCTC 11168).